Reading from the N-terminus, the 1159-residue chain is MLDFLAENNLCGQAILRIVSCGNAIIAELLRLSEFIPAVFRLKDRADQQKYGDIIFDFSYFKGPELWESKLDAKPELQDLDEEFRENNIEIVTRFYLAFQSVHKYIVDLNRYLDDLNEGVYIQQTLETVLLNEDGKQLLCEALYLYGVMLLVIDQKIEGEVRERMLVSYYRYSAARSSADSNMDDICKLLRSTGYSSQPGAKRPSNYPESYFQRVPINESFISMVIGRLRSDDIYNQVSAYPLPEHRSTALANQAAMLYVILYFEPSILHTHQAKMREIVDKYFPDNWVISIYMGITVNLVDAWEPYKAAKTALNNTLDLSNVREQASRYATVSERVHAQVQQFLKEGYLREEMVLDNIPKLLNCLRDCNVAIRWLMLHTADSACDPNNKRLRQIKDQILTDSRYNPRILFQLLLDTAQFEFILKEMFKQMLSEKQTKWEHYKKEGSERMTELADVFSGVKPLTRVEKNENLQAWFREISKQILSLNYDDSTAAGRKTVQLIQALEEVQEFHQLESNLQVCQFLADTRKFLHQMIRTINIKEEVLITMQIVGDLSFAWQLIDSFTSIMQESIRVNPSMVTKLRATFLKLASALDLPLLRINQANSPDLLSVSQYYSGELVSYVRKVLQIIPESMFTSLLKIIKLQTHDIIEVPTRLDKDKLRDYAQLGPRYEVAKLTHAISIFTEGILMMKTTLVGIIKVDPKQLLEDGIRKELVKRVAFALHRGLIFNPRAKPSELMPKLKELGATMDGFHRSFEYIQDYVNIYGLKIWQEEVSRIINYNVEQECNNFLRTKIQDWQSMYQSTHIPIPKFTPVDESVTFIGRLCREILRITDPKMTCHIDQLNTWYDMKTHQEVTSSRLFSEIQTTLGTFGLNGLDRLLCFMIVKELQNFLSMFQKIILRDRTVQDTLKTLMNAVSPLKSIVANSNKIYFSAIAKTQKIWTAYLEAIMKVGQMQILRQQIANELNYSCRFDSKHLAAALENLNKALLADIEAHYQDPSLPYPKEDNTLLYEITAYLEAAGIHNPLNKIYITTKRLPYFPIVNFLFLIAQLPKLQYNKNLGMVCRKPTDPVDWPPLVLGLLTLLKQFHSRYTEQFLALIGQFICSTVEQCTSQKIPEIPADVVGALLFLEDYVRYTKLPRRVAEAHVPNFIFDEFRTVL.

Residue S917 is modified to Phosphoserine.

This sequence belongs to the strumpellin family. In terms of assembly, component of the WASH core complex also described as WASH regulatory complex (SHRC) composed of WASH (WASHC1, WASH2P or WASH3P), WASHC2 (WASHC2A or WASHC2C), WASHC3, WASHC4 and WASHC5. The WASH core complex associates via WASHC2 with the F-actin-capping protein dimer (formed by CAPZA1, CAPZA2 or CAPZA3 and CAPZB) in a transient or substoichiometric manner which was initially described as WASH complex. Interacts with VCP, PI4K2A. In terms of tissue distribution, expressed ubiquitously.

It is found in the cytoplasm. The protein resides in the cytosol. It localises to the endoplasmic reticulum. Its subcellular location is the early endosome. Acts as a component of the WASH core complex that functions as a nucleation-promoting factor (NPF) at the surface of endosomes, where it recruits and activates the Arp2/3 complex to induce actin polymerization, playing a key role in the fission of tubules that serve as transport intermediates during endosome sorting. May be involved in axonal outgrowth. Involved in cellular localization of ADRB2. Involved in cellular trafficking of BLOC-1 complex cargos such as ATP7A and VAMP7. The chain is WASH complex subunit 5 from Homo sapiens (Human).